A 792-amino-acid chain; its full sequence is Molybdenum cofactor sulfurase (792 aa).

Lys-246 bears the N6-(pyridoxal phosphate)lysine mark. The active site involves Cys-414. Residues 646 to 792 (LRLLRQSSQR…LTCGDVVVVT (147 aa)) form the MOSC domain. Phosphoserine is present on Ser-748.

The protein belongs to the class-V pyridoxal-phosphate-dependent aminotransferase family. MOCOS subfamily. Pyridoxal 5'-phosphate serves as cofactor.

The catalysed reaction is Mo-molybdopterin + L-cysteine + AH2 = thio-Mo-molybdopterin + L-alanine + A + H2O. It functions in the pathway cofactor biosynthesis; molybdopterin biosynthesis. Functionally, sulfurates the molybdenum cofactor. Sulfation of molybdenum is essential for xanthine dehydrogenase (XDH) and aldehyde oxidase (ADO) enzymes in which molybdenum cofactor is liganded by 1 oxygen and 1 sulfur atom in active form. This is Molybdenum cofactor sulfurase from Drosophila pseudoobscura pseudoobscura (Fruit fly).